The chain runs to 260 residues: Scytalidopepsin B (260 aa).

Positions 1–20 (MKFTTAAVLSALVSAEIAFA) are cleaved as a signal peptide. Positions 21 to 54 (APGGNGFARRQARRQARAAGLKASPFRQVNAKEA) are excised as a propeptide. A disulfide bond links Cys-101 and Cys-181. The Proton acceptor role is filled by Glu-190. Cystine bridges form between Cys-195–Cys-219 and Cys-248–Cys-257.

This sequence belongs to the peptidase G1 family. In terms of assembly, monomer.

It catalyses the reaction Hydrolysis of proteins with broad specificity, cleaving 24-Phe-|-Phe-25, but not 15-Leu-|-Tyr-16 and 25-Phe-|-Tyr-26 in the B chain of insulin.. The chain is Scytalidopepsin B from Scytalidium lignicola (Hyphomycete).